A 427-amino-acid chain; its full sequence is Indole diterpene prenyltransferase idtF (427 aa).

Positions 97, 195, 264, 266, 268, and 352 each coordinate substrate.

The protein belongs to the tryptophan dimethylallyltransferase family.

It functions in the pathway secondary metabolite biosynthesis. Functionally, indole diterpene prenyltransferase; part of the gene cluster that mediates the biosynthesis of paspalitrems, indole-diterpene (IDT) mycotoxins that are potent tremorgens in mammals. The geranylgeranyl diphosphate (GGPP) synthase idtG is proposed to catalyze the first step in IDT biosynthesis via catalysis of a series of iterative condensations of isopentenyl diphosphate (IPP) with dimethylallyl diphosphate (DMAPP), geranyl diphosphate (GPP), and farnesyl diphosphate (FPP), to form GGPP. Condensation of indole-3-glycerol phosphate with GGPP by the prenyltransferase idtC then forms 3-geranylgeranylindole (3-GGI). Epoxidation of the two terminal alkenes of the geranylgeranyl moiety by the FAD-dependent monooxygenase idtM, and cyclization by the terpene cyclase idtB then leads to the production of paspaline. The cytochrome P450 monooxygenase idtP then catalyzes oxidative elimination of the pendant methyl group at C-12 of paspaline and generates the C-10 ketone to yield 13-desoxypaxilline. The cytochrome P450 monooxygenase idtQ may catalyze the C-13 oxidation of 13-desoxypaxilline to afford paxilline. Considering that both paspalicine and paxilline were detected in C.paspali, idtQ also catalyzes the formation of paspalinine from 13-desoxypaxilline via paspalicine as an intermediate. Finally, the alpha-prenyltransferase idtF prenylates paspalinine at the C-20 or the C-21 positions to yield paspalitrems A and C, respectively. The hydroxylation of paspalitrem A at C-32 by a still unknown oxidase affords paspalitrem B. This chain is Indole diterpene prenyltransferase idtF, found in Claviceps paspali (Rye ergot fungus).